Consider the following 282-residue polypeptide: Bifunctional protein FolD (282 aa).

Residues 165-167 (GRS), serine 190, and threonine 231 contribute to the NADP(+) site.

It belongs to the tetrahydrofolate dehydrogenase/cyclohydrolase family. In terms of assembly, homodimer.

It carries out the reaction (6R)-5,10-methylene-5,6,7,8-tetrahydrofolate + NADP(+) = (6R)-5,10-methenyltetrahydrofolate + NADPH. It catalyses the reaction (6R)-5,10-methenyltetrahydrofolate + H2O = (6R)-10-formyltetrahydrofolate + H(+). Its pathway is one-carbon metabolism; tetrahydrofolate interconversion. Functionally, catalyzes the oxidation of 5,10-methylenetetrahydrofolate to 5,10-methenyltetrahydrofolate and then the hydrolysis of 5,10-methenyltetrahydrofolate to 10-formyltetrahydrofolate. This is Bifunctional protein FolD from Clostridium botulinum (strain Eklund 17B / Type B).